The primary structure comprises 360 residues: Phospho-N-acetylmuramoyl-pentapeptide-transferase (360 aa).

Residues 1–25 are Periplasmic-facing; it reads MLVWLAEHLVKYYSGFNVFSYLTFR. The helical transmembrane segment at 26 to 46 threads the bilayer; it reads AIVSLLTALFISLWMGPRMIA. Over 47–71 the chain is Cytoplasmic; the sequence is RLQKLSFGQVVRNDGPESHFSKRGT. The helical transmembrane segment at 72–92 threads the bilayer; sequence PTMGGIMILTAIVISVLLWAY. Residue proline 93 is a topological domain, periplasmic. A helical transmembrane segment spans residues 94–114; the sequence is SNPYVWCVLVVLIGYGIIGFV. Over 115–131 the chain is Cytoplasmic; sequence DDYRKVVRKDTKGLIAR. A helical membrane pass occupies residues 132 to 152; that stretch reads WKYFWMSVIALGVAFALYLVG. Residues 153–167 lie on the Periplasmic side of the membrane; that stretch reads KDTPVTQLVVPFFKD. A helical membrane pass occupies residues 168–188; it reads VMPQLGLFYILLSYFVIVGTG. Topologically, residues 189–198 are cytoplasmic; the sequence is NAVNLTDGLD. The helical transmembrane segment at 199–219 threads the bilayer; sequence GLAIMPTVFVAAGFALVAWAT. At 220–235 the chain is on the periplasmic side; that stretch reads GNMNFANYLHIPYLRH. A helical membrane pass occupies residues 236–256; it reads AGELVIVCTAIVGAGLGFLWF. At 257-262 the chain is on the cytoplasmic side; the sequence is NTYPAQ. Residues 263–283 traverse the membrane as a helical segment; sequence VFMGDVGSLALGGALGIIAVL. Topologically, residues 284 to 287 are periplasmic; it reads LRQE. The chain crosses the membrane as a helical span at residues 288-308; that stretch reads FLLVIMGGVFVVETLSVILQV. Residues 309–337 lie on the Cytoplasmic side of the membrane; it reads GSFKLRGQRIFRMAPIHHHYELKGWPEPR. The helical transmembrane segment at 338–358 threads the bilayer; that stretch reads VIVRFWIISLMLVLIGLATLK. The Periplasmic portion of the chain corresponds to 359-360; that stretch reads VR.

Belongs to the glycosyltransferase 4 family. MraY subfamily. The cofactor is Mg(2+).

Its subcellular location is the cell inner membrane. The enzyme catalyses UDP-N-acetyl-alpha-D-muramoyl-L-alanyl-gamma-D-glutamyl-meso-2,6-diaminopimeloyl-D-alanyl-D-alanine + di-trans,octa-cis-undecaprenyl phosphate = di-trans,octa-cis-undecaprenyl diphospho-N-acetyl-alpha-D-muramoyl-L-alanyl-D-glutamyl-meso-2,6-diaminopimeloyl-D-alanyl-D-alanine + UMP. Its pathway is cell wall biogenesis; peptidoglycan biosynthesis. Functionally, catalyzes the initial step of the lipid cycle reactions in the biosynthesis of the cell wall peptidoglycan: transfers peptidoglycan precursor phospho-MurNAc-pentapeptide from UDP-MurNAc-pentapeptide onto the lipid carrier undecaprenyl phosphate, yielding undecaprenyl-pyrophosphoryl-MurNAc-pentapeptide, known as lipid I. This is Phospho-N-acetylmuramoyl-pentapeptide-transferase from Salmonella paratyphi C (strain RKS4594).